We begin with the raw amino-acid sequence, 93 residues long: Small ribosomal subunit protein uS17 (93 aa).

The protein belongs to the universal ribosomal protein uS17 family. As to quaternary structure, part of the 30S ribosomal subunit.

One of the primary rRNA binding proteins, it binds specifically to the 5'-end of 16S ribosomal RNA. This Bordetella bronchiseptica (strain ATCC BAA-588 / NCTC 13252 / RB50) (Alcaligenes bronchisepticus) protein is Small ribosomal subunit protein uS17.